A 428-amino-acid polypeptide reads, in one-letter code: Divergent protein kinase domain 1A (428 aa).

At 1–27 the chain is on the cytoplasmic side; that stretch reads MARSLCPGAWLRKPYYLQARFSYVRMK. Residues 28–48 form a helical membrane-spanning segment; it reads YLFFSWLVVFVGSWIIYVQYS. Residues 49 to 428 lie on the Lumenal side of the membrane; it reads TYTELCRGKD…WKKISYTNDS (380 aa).

This sequence belongs to the DIPK family. Among the many cysteines in the lumenal domain, most are probably involved in disulfide bonds.

The protein resides in the endoplasmic reticulum membrane. This Homo sapiens (Human) protein is Divergent protein kinase domain 1A.